A 406-amino-acid polypeptide reads, in one-letter code: Argininosuccinate synthase (406 aa).

ATP is bound by residues alanine 11 to serine 19 and alanine 38. Residues tyrosine 91 and serine 96 each coordinate L-citrulline. Position 121 (glycine 121) interacts with ATP. Residues threonine 123, asparagine 127, and aspartate 128 each coordinate L-aspartate. Asparagine 127 contributes to the L-citrulline binding site. Positions 131, 181, 190, 266, and 278 each coordinate L-citrulline.

This sequence belongs to the argininosuccinate synthase family. Type 1 subfamily. As to quaternary structure, homotetramer.

The protein resides in the cytoplasm. The catalysed reaction is L-citrulline + L-aspartate + ATP = 2-(N(omega)-L-arginino)succinate + AMP + diphosphate + H(+). Its pathway is amino-acid biosynthesis; L-arginine biosynthesis; L-arginine from L-ornithine and carbamoyl phosphate: step 2/3. The protein is Argininosuccinate synthase of Campylobacter jejuni (strain RM1221).